Here is a 445-residue protein sequence, read N- to C-terminus: ATP-dependent protease ATPase subunit HslU (445 aa).

ATP is bound by residues Ile-17, 59–64 (GVGKTE), Asp-254, Glu-319, and Arg-391.

Belongs to the ClpX chaperone family. HslU subfamily. In terms of assembly, a double ring-shaped homohexamer of HslV is capped on each side by a ring-shaped HslU homohexamer. The assembly of the HslU/HslV complex is dependent on binding of ATP.

The protein localises to the cytoplasm. Its function is as follows. ATPase subunit of a proteasome-like degradation complex; this subunit has chaperone activity. The binding of ATP and its subsequent hydrolysis by HslU are essential for unfolding of protein substrates subsequently hydrolyzed by HslV. HslU recognizes the N-terminal part of its protein substrates and unfolds these before they are guided to HslV for hydrolysis. The polypeptide is ATP-dependent protease ATPase subunit HslU (Pseudomonas fluorescens (strain SBW25)).